We begin with the raw amino-acid sequence, 233 residues long: Synaptogyrin-4 (233 aa).

The MARVEL domain maps to phenylalanine 18–arginine 169. 4 consecutive transmembrane segments (helical) span residues isoleucine 25 to glycine 45, cysteine 66 to isoleucine 86, leucine 104 to leucine 124, and alanine 145 to phenylalanine 165. Positions serine 191 to serine 233 are disordered. Over residues glycine 204–methionine 219 the composition is skewed to polar residues.

The protein belongs to the synaptogyrin family.

It is found in the membrane. The polypeptide is Synaptogyrin-4 (Syngr4) (Mus musculus (Mouse)).